Reading from the N-terminus, the 420-residue chain is Ribulose bisphosphate carboxylase large chain (420 aa).

Positions 103 and 153 each coordinate substrate. The Proton acceptor role is filled by Lys-155. Lys-157 provides a ligand contact to substrate. Mg(2+) is bound by residues Lys-181, Asp-183, and Glu-184. Lys-181 carries the post-translational modification N6-carboxylysine. The active-site Proton acceptor is the His-274. Positions 275, 307, and 359 each coordinate substrate.

It belongs to the RuBisCO large chain family. Type I subfamily. In terms of assembly, heterohexadecamer of 8 large chains and 8 small chains; disulfide-linked. The disulfide link is formed within the large subunit homodimers. The cofactor is Mg(2+). In terms of processing, the disulfide bond which can form in the large chain dimeric partners within the hexadecamer appears to be associated with oxidative stress and protein turnover.

It is found in the plastid. The protein localises to the chloroplast. It carries out the reaction 2 (2R)-3-phosphoglycerate + 2 H(+) = D-ribulose 1,5-bisphosphate + CO2 + H2O. It catalyses the reaction D-ribulose 1,5-bisphosphate + O2 = 2-phosphoglycolate + (2R)-3-phosphoglycerate + 2 H(+). Functionally, ruBisCO catalyzes two reactions: the carboxylation of D-ribulose 1,5-bisphosphate, the primary event in carbon dioxide fixation, as well as the oxidative fragmentation of the pentose substrate in the photorespiration process. Both reactions occur simultaneously and in competition at the same active site. This is Ribulose bisphosphate carboxylase large chain from Anemia mexicana (Mexican fern).